The sequence spans 445 residues: Chromosomal replication initiator protein DnaA (445 aa).

Residues 1–73 form a domain I, interacts with DnaA modulators region; that stretch reads MSPNSTLWQT…NELATKYSST (73 aa). The domain II stretch occupies residues 73–102; the sequence is TPVRLKFVSQEEVIEEPVADRKLTIDYRQG. The interval 103 to 323 is domain III, AAA+ region; the sequence is NLNSTYTFDS…GALIRLISYA (221 aa). Gly-147, Gly-149, Lys-150, and Thr-151 together coordinate ATP. The domain IV, binds dsDNA stretch occupies residues 324–445; sequence QTFNLEITMN…KFAVDSIVKK (122 aa).

It belongs to the DnaA family. In terms of assembly, oligomerizes as a right-handed, spiral filament on DNA at oriC.

The protein resides in the cytoplasm. Functionally, plays an essential role in the initiation and regulation of chromosomal replication. ATP-DnaA binds to the origin of replication (oriC) to initiate formation of the DNA replication initiation complex once per cell cycle. Binds the DnaA box (a 9 base pair repeat at the origin) and separates the double-stranded (ds)DNA. Forms a right-handed helical filament on oriC DNA; dsDNA binds to the exterior of the filament while single-stranded (ss)DNA is stabiized in the filament's interior. The ATP-DnaA-oriC complex binds and stabilizes one strand of the AT-rich DNA unwinding element (DUE), permitting loading of DNA polymerase. After initiation quickly degrades to an ADP-DnaA complex that is not apt for DNA replication. Binds acidic phospholipids. This chain is Chromosomal replication initiator protein DnaA, found in Acholeplasma laidlawii.